The chain runs to 530 residues: Na(+)/H(+) antiporter NhaB (530 aa).

The next 12 helical transmembrane spans lie at 13–33 (FLGKAPDWYKIAILSFLVINP), 34–54 (LVFFFVDPFTAGWLLVVEFIF), 90–110 (LVANIEVLLLLVFMVAGIYFM), 121–141 (ILIGIKSKTALSVAFCFTAAF), 145–165 (FLDALTVIAVVISVAVGFYAI), 205–225 (LLMHAGVGTALGGVMTMVGEP), 241–261 (FIIRMLPITAPVFICGILTCI), 306–326 (GLIAVWLIVGLALHLAAVGLI), 351–371 (EEALPFTALLAVFFAVVAVII), 393–413 (LALFYVANGLLSMVSDNVFVG), 455–475 (GQAAFLFLLTSALAPLIQLSY), and 481–501 (MALPYTIVLALVGMFGIIFFL).

The protein belongs to the NhaB Na(+)/H(+) (TC 2.A.34) antiporter family.

It is found in the cell inner membrane. The catalysed reaction is 2 Na(+)(in) + 3 H(+)(out) = 2 Na(+)(out) + 3 H(+)(in). Functionally, na(+)/H(+) antiporter that extrudes sodium in exchange for external protons. In Aliivibrio fischeri (strain ATCC 700601 / ES114) (Vibrio fischeri), this protein is Na(+)/H(+) antiporter NhaB.